The primary structure comprises 317 residues: Beta-ketoacyl-[acyl-carrier-protein] synthase III (317 aa).

Residues cysteine 112 and histidine 244 contribute to the active site. The segment at 245-249 is ACP-binding; it reads QANLR. The active site involves asparagine 274.

It belongs to the thiolase-like superfamily. FabH family. As to quaternary structure, homodimer.

Its subcellular location is the cytoplasm. It carries out the reaction malonyl-[ACP] + acetyl-CoA + H(+) = 3-oxobutanoyl-[ACP] + CO2 + CoA. The protein operates within lipid metabolism; fatty acid biosynthesis. Its function is as follows. Catalyzes the condensation reaction of fatty acid synthesis by the addition to an acyl acceptor of two carbons from malonyl-ACP. Catalyzes the first condensation reaction which initiates fatty acid synthesis and may therefore play a role in governing the total rate of fatty acid production. Possesses both acetoacetyl-ACP synthase and acetyl transacylase activities. Its substrate specificity determines the biosynthesis of branched-chain and/or straight-chain of fatty acids. The chain is Beta-ketoacyl-[acyl-carrier-protein] synthase III from Shigella sonnei (strain Ss046).